Reading from the N-terminus, the 226-residue chain is Transmembrane protein 204 (226 aa).

Residues 1-5 (MTVRK) are Cytoplasmic-facing. The chain crosses the membrane as a helical span at residues 6–26 (VVATAVLVALVSLVLNNAAAF). Residues 27–103 (TPNWVYQTLE…LQFDMMRACN (77 aa)) are Extracellular-facing. A helical transmembrane segment spans residues 104 to 124 (LVATAALAAGQLTFVLGLTGL). Over 125-136 (PLLSPDAQCWEE) the chain is Cytoplasmic. The chain crosses the membrane as a helical span at residues 137–157 (AMAAAFQLASFVLVIGLVTFY). Topologically, residues 158-170 (RIGPYTSLSWSCY) are extracellular. A helical membrane pass occupies residues 171-191 (LNIGACLLATLAAAMLIWNVL). Over 192 to 226 (HRREDCTAPRVIVISRSLTARFRRGLDNDYVESPC) the chain is Cytoplasmic.

It localises to the cell junction. The protein localises to the adherens junction. The protein resides in the cell membrane. Functionally, can influence paracellular permeability. Appears to be involved in cell-cell interactions through adherens. This Bos taurus (Bovine) protein is Transmembrane protein 204 (TMEM204).